The primary structure comprises 526 residues: Tyrosine-protein kinase transforming protein Src (526 aa).

The interval 1–57 is disordered; the sequence is MGSSKSKPKDPSQRRRSLEPPDSTHHGGFPASQTPNKTAAPDTHRTPSRSFGTVATE. The N-myristoyl glycine; by host moiety is linked to residue glycine 2. A compositionally biased stretch (basic and acidic residues) spans 7 to 25; it reads KPKDPSQRRRSLEPPDSTH. In terms of domain architecture, SH3 spans 81-142; that stretch reads GGVTTFVALY…PSNYVAPSDS (62 aa). The SH2 domain maps to 148 to 245; sequence WYFGKITRRE…GLCHRLTNVC (98 aa). One can recognise a Protein kinase domain in the interval 267-517; sequence LRLEVKLGQG…TFEYLQAQLL (251 aa). ATP contacts are provided by residues 273 to 281 and lysine 295; that span reads LGQGCFGEV. Aspartate 386 (proton acceptor) is an active-site residue. Phosphotyrosine; by autocatalysis is present on tyrosine 416.

It belongs to the protein kinase superfamily. Tyr protein kinase family. SRC subfamily. In terms of assembly, homodimer. In terms of processing, the phosphorylated form is termed pp60v-src.

It carries out the reaction L-tyrosyl-[protein] + ATP = O-phospho-L-tyrosyl-[protein] + ADP + H(+). Its function is as follows. This phosphoprotein, required for both the initiation and the maintenance of neoplastic transformation, is a protein kinase that catalyzes the phosphorylation of tyrosine residues in vitro. Causes mitotic slippage in addition to cytokinesis failure in the host cell. Phosphorylates and attenuates the activity of host CDK1, possibly causing the mitotic slippage. The chain is Tyrosine-protein kinase transforming protein Src (V-SRC) from Rous sarcoma virus subgroup A (strain Schmidt-Ruppin) (RSV-SR-A).